The sequence spans 32 residues: Calcitonin (32 aa).

Cys1 and Cys7 are joined by a disulfide. Pro32 is modified (proline amide).

It belongs to the calcitonin family.

It is found in the secreted. In terms of biological role, calcitonin is a peptide hormone that causes a rapid but short-lived drop in the level of calcium and phosphate in blood by promoting the incorporation of those ions in the bones. Calcitonin function is mediated by the calcitonin receptor/CALCR and the CALCR-RAMP2 (AMYR2) receptor complex. This Bos taurus (Bovine) protein is Calcitonin (CALCA).